The sequence spans 78 residues: RNA-binding protein Hfq (78 aa).

The Sm domain maps to Asp10–Val70.

The protein belongs to the Hfq family. Homohexamer.

In terms of biological role, RNA chaperone that binds small regulatory RNA (sRNAs) and mRNAs to facilitate mRNA translational regulation in response to envelope stress, environmental stress and changes in metabolite concentrations. Also binds with high specificity to tRNAs. The chain is RNA-binding protein Hfq from Brucella abortus (strain S19).